A 202-amino-acid chain; its full sequence is Small ribosomal subunit protein uS4c (202 aa).

Residues 89-152 form the S4 RNA-binding domain; it reads MRLDNIIFRL…QSNTFINNCI (64 aa).

It belongs to the universal ribosomal protein uS4 family. As to quaternary structure, part of the 30S ribosomal subunit. Contacts protein S5. The interaction surface between S4 and S5 is involved in control of translational fidelity.

It is found in the plastid. Functionally, one of the primary rRNA binding proteins, it binds directly to 16S rRNA where it nucleates assembly of the body of the 30S subunit. Its function is as follows. With S5 and S12 plays an important role in translational accuracy. The sequence is that of Small ribosomal subunit protein uS4c (rps4) from Epifagus virginiana (Beechdrops).